The chain runs to 500 residues: Probable cytosol aminopeptidase (500 aa).

Lysine 265 and aspartate 270 together coordinate Mn(2+). Lysine 277 is a catalytic residue. Positions 288, 347, and 349 each coordinate Mn(2+). Arginine 351 is an active-site residue.

The protein belongs to the peptidase M17 family. Requires Mn(2+) as cofactor.

It is found in the cytoplasm. It carries out the reaction Release of an N-terminal amino acid, Xaa-|-Yaa-, in which Xaa is preferably Leu, but may be other amino acids including Pro although not Arg or Lys, and Yaa may be Pro. Amino acid amides and methyl esters are also readily hydrolyzed, but rates on arylamides are exceedingly low.. The enzyme catalyses Release of an N-terminal amino acid, preferentially leucine, but not glutamic or aspartic acids.. Its function is as follows. Presumably involved in the processing and regular turnover of intracellular proteins. Catalyzes the removal of unsubstituted N-terminal amino acids from various peptides. This chain is Probable cytosol aminopeptidase, found in Bdellovibrio bacteriovorus (strain ATCC 15356 / DSM 50701 / NCIMB 9529 / HD100).